The chain runs to 398 residues: Mannitol-1-phosphate 5-dehydrogenase (398 aa).

Residue 10–21 (AVHFGAGNIGRG) participates in NAD(+) binding. Lys221 is a catalytic residue.

It belongs to the mannitol dehydrogenase family. In terms of assembly, monomer.

It catalyses the reaction D-mannitol 1-phosphate + NAD(+) = beta-D-fructose 6-phosphate + NADH + H(+). In terms of biological role, catalyzes the NAD(H)-dependent interconversion of D-fructose 6-phosphate and D-mannitol 1-phosphate in the mannitol metabolic pathway. This Neurospora crassa (strain ATCC 24698 / 74-OR23-1A / CBS 708.71 / DSM 1257 / FGSC 987) protein is Mannitol-1-phosphate 5-dehydrogenase.